The following is a 359-amino-acid chain: MELIPDLPETVAYECLLRSSYKQFPLMASVCKLWQREISLSDFFRHRKASGHSQELVVLSQARVDPVKELVSGNKTIPTPVYRISVLELGTGLRSELPPVPGHSNGLPLFCRLVSVGSDLVVLCGLDPVTWRTSDSVFVFSFLTSTWRVGKSMPGGPRSFFACASDSQRNVFVAGGHDEDKNAMMSALVYDVAEDRWAFLPDMGRERDECTAIFHAGKFHVIGGYSTEEQGQFSKTAESFDVTTWRWSPQGEEFLSSEMTMWPPICAAGENGDLYACCRRDLMMMKDDTWYKVGNLPADVCNVSYVAIRRSGNLVVIGSARYGEPSVGYNWDMSNSRWLKLETHDKYEGHVQAGCFLEI.

Residues 2–49 (ELIPDLPETVAYECLLRSSYKQFPLMASVCKLWQREISLSDFFRHRKA) enclose the F-box domain. 5 Kelch repeats span residues 119–167 (DLVV…ASDS), 170–217 (NVFV…FHAG), 219–269 (FHVI…CAAG), 271–310 (NGDLYACCRRDLMMMKDDTWYKVGNLPADVCNVSYVAIRR), and 313–358 (NLVV…CFLE).

The polypeptide is F-box/kelch-repeat protein At1g15670 (Arabidopsis thaliana (Mouse-ear cress)).